A 172-amino-acid chain; its full sequence is MERAIQGSDVREQADSECWDGGGGGTTSPFKLPDESPSLHEWRLHHSEESENKDNPLGFKESWSFGKVVFKRYLRYDGAETSLHRALGSWERDSVNDAASRFLGLSQIGCTYSIRFRGTRLTLSGGSGTLQRLIEMAIRTKRTMLQPTPSEREGNVSRRRPEGTEAFKEESE.

2 stretches are compositionally biased toward basic and acidic residues: residues 1-14 (MERAIQGSDVREQA) and 150-172 (SEREGNVSRRRPEGTEAFKEESE). 2 disordered regions span residues 1 to 34 (MERAIQGSDVREQADSECWDGGGGGTTSPFKLPD) and 145 to 172 (LQPTPSEREGNVSRRRPEGTEAFKEESE).

Belongs to the tombusvirus protein p19 family. As to quaternary structure, homodimer.

Viral suppressor of RNA silencing which binds specifically to silencing RNAs (siRNAs). Acts as a molecular caliper to specifically select siRNAs based on the length of the duplex region of the RNA. In Cymbidium ringspot virus (CymRSV), this protein is RNA silencing suppressor p19.